The primary structure comprises 747 residues: Elongation factor G, mitochondrial (747 aa).

Residues 1-16 constitute a mitochondrion transit peptide; that stretch reads MSLIMRVLNGNLSLRL. Residues 42 to 319 enclose the tr-type G domain; sequence ERIRNIGISA…AIIDYLPNPG (278 aa). GTP is bound by residues 51-58, 118-122, and 172-175; these read AHIDSGKT, DTPGH, and NKLD.

The protein belongs to the TRAFAC class translation factor GTPase superfamily. Classic translation factor GTPase family. EF-G/EF-2 subfamily.

It is found in the mitochondrion. The protein operates within protein biosynthesis; polypeptide chain elongation. Its function is as follows. Mitochondrial GTPase that catalyzes the GTP-dependent ribosomal translocation step during translation elongation. During this step, the ribosome changes from the pre-translocational (PRE) to the post-translocational (POST) state as the newly formed A-site-bound peptidyl-tRNA and P-site-bound deacylated tRNA move to the P and E sites, respectively. Catalyzes the coordinated movement of the two tRNA molecules, the mRNA and conformational changes in the ribosome. Essential during development as it acts as a retrograde signal from mitochondria to the nucleus to slow down cell proliferation if mitochondrial energy output is low. This is Elongation factor G, mitochondrial from Drosophila grimshawi (Hawaiian fruit fly).